We begin with the raw amino-acid sequence, 136 residues long: Large ribosomal subunit protein eL27B (136 aa).

This sequence belongs to the eukaryotic ribosomal protein eL27 family. As to quaternary structure, component of the large ribosomal subunit (LSU). Mature yeast ribosomes consist of a small (40S) and a large (60S) subunit. The 40S small subunit contains 1 molecule of ribosomal RNA (18S rRNA) and 33 different proteins (encoded by 57 genes). The large 60S subunit contains 3 rRNA molecules (25S, 5.8S and 5S rRNA) and 46 different proteins (encoded by 81 genes).

The protein localises to the cytoplasm. Its function is as follows. Component of the ribosome, a large ribonucleoprotein complex responsible for the synthesis of proteins in the cell. The small ribosomal subunit (SSU) binds messenger RNAs (mRNAs) and translates the encoded message by selecting cognate aminoacyl-transfer RNA (tRNA) molecules. The large subunit (LSU) contains the ribosomal catalytic site termed the peptidyl transferase center (PTC), which catalyzes the formation of peptide bonds, thereby polymerizing the amino acids delivered by tRNAs into a polypeptide chain. The nascent polypeptides leave the ribosome through a tunnel in the LSU and interact with protein factors that function in enzymatic processing, targeting, and the membrane insertion of nascent chains at the exit of the ribosomal tunnel. This Saccharomyces cerevisiae (strain ATCC 204508 / S288c) (Baker's yeast) protein is Large ribosomal subunit protein eL27B.